Reading from the N-terminus, the 379-residue chain is Cobalt-precorrin-5B C(1)-methyltransferase (379 aa).

It belongs to the CbiD family.

The enzyme catalyses Co-precorrin-5B + S-adenosyl-L-methionine = Co-precorrin-6A + S-adenosyl-L-homocysteine. Its pathway is cofactor biosynthesis; adenosylcobalamin biosynthesis; cob(II)yrinate a,c-diamide from sirohydrochlorin (anaerobic route): step 6/10. Its function is as follows. Catalyzes the methylation of C-1 in cobalt-precorrin-5B to form cobalt-precorrin-6A. This chain is Cobalt-precorrin-5B C(1)-methyltransferase, found in Salmonella arizonae (strain ATCC BAA-731 / CDC346-86 / RSK2980).